The sequence spans 601 residues: Proteasome-associated ATPase (601 aa).

Residues 1 to 15 show a composition bias toward gly residues; the sequence is MSGPRSGSGSGGSTG. A disordered region spans residues 1–31; the sequence is MSGPRSGSGSGGSTGRPGDAESRRSAYEKEA. The span at 18–31 shows a compositional bias: basic and acidic residues; the sequence is GDAESRRSAYEKEA. A coiled-coil region spans residues 18 to 106; it reads GDAESRRSAY…LKEEVDRLAQ (89 aa). Residue 289–294 participates in ATP binding; it reads GCGKTL. The interval 600-601 is docks into pockets in the proteasome alpha-ring; sequence YL.

The protein belongs to the AAA ATPase family. As to quaternary structure, homohexamer. Assembles into a hexameric ring structure that caps the 20S proteasome core. Strongly interacts with the prokaryotic ubiquitin-like protein Pup through a hydrophobic interface; the interacting region of ARC lies in its N-terminal coiled-coil domain. There is one Pup binding site per ARC hexamer ring. Upon ATP-binding, the C-terminus of ARC interacts with the alpha-rings of the proteasome core, possibly by binding to the intersubunit pockets.

It functions in the pathway protein degradation; proteasomal Pup-dependent pathway. In terms of biological role, ATPase which is responsible for recognizing, binding, unfolding and translocation of pupylated proteins into the bacterial 20S proteasome core particle. May be essential for opening the gate of the 20S proteasome via an interaction with its C-terminus, thereby allowing substrate entry and access to the site of proteolysis. Thus, the C-termini of the proteasomal ATPase may function like a 'key in a lock' to induce gate opening and therefore regulate proteolysis. This is Proteasome-associated ATPase from Frankia alni (strain DSM 45986 / CECT 9034 / ACN14a).